The following is a 249-amino-acid chain: Transmembrane protein 51 (249 aa).

2 consecutive transmembrane segments (helical) span residues 17–37 and 64–84; these read IGLG…VPGF and VAYV…CLSI. 3 disordered regions span residues 95-126, 161-199, and 213-249; these read ELAR…SRYY, TGLD…PLKV, and RITL…RPPD. A compositionally biased stretch (polar residues) spans 99-108; it reads IQQQAGTVPH. 4 positions are modified to phosphoserine: serine 109, serine 114, serine 178, and serine 188. Positions 167 to 178 are enriched in polar residues; the sequence is TPTSTRAETETS. Basic residues predominate over residues 190 to 199; sequence LAKRLKPLKV. The span at 220–234 shows a compositional bias: pro residues; the sequence is NVPPPSIEPLTPPPL.

The protein resides in the membrane. The sequence is that of Transmembrane protein 51 (Tmem51) from Mus musculus (Mouse).